We begin with the raw amino-acid sequence, 520 residues long: Cyclic AMP-responsive element-binding protein 3-like protein 2 (520 aa).

Residues 1–379 lie on the Cytoplasmic side of the membrane; it reads MEVLESGEQG…KLAGTQTGTC (379 aa). Residue Ser93 is modified to Phosphoserine. Lys178 participates in a covalent cross-link: Glycyl lysine isopeptide (Lys-Gly) (interchain with G-Cter in SUMO2). A Phosphoserine modification is found at Ser191. The segment at 195–264 is disordered; the sequence is APVDHLHLPP…PHKLQGSGPL (70 aa). Low complexity-rich tracts occupy residues 208–220 and 234–255; these read SSHGSDSEGSLSP and SPSRAAPRAPSALSSSPLLTAP. The bZIP domain maps to 294–357; it reads ALKKIRRKIK…RTLLQQLQKL (64 aa). The basic motif stretch occupies residues 296-325; that stretch reads KKIRRKIKNKISAQESRRKKKEYMDSLEKK. The leucine-zipper stretch occupies residues 336–357; sequence LRKKVEVLENTNRTLLQQLQKL. Residues 380-400 traverse the membrane as a helical; Signal-anchor for type II membrane protein segment; sequence LMVVVLCFAVAFGSFFQGYGP. Over 401–520 the chain is Lumenal; that stretch reads YPSATKMALP…ELDRRVNTTF (120 aa). The S1P recognition signature appears at 427–430; sequence RNLL. Asn480, Asn504, and Asn517 each carry an N-linked (GlcNAc...) asparagine glycan.

This sequence belongs to the bZIP family. ATF subfamily. In terms of assembly, binds DNA as a dimer. In terms of processing, upon ER stress, translocated to the Golgi apparatus, where it is processed by regulated intramembrane proteolysis (RIP) to release the cytosol-facing N-terminal transcription factor domain. The cleavage is performed sequentially by site-1 and site-2 proteases (S1P/MBTPS1 and S2P/MBTPS2). Post-translationally, N-glycosylated. Ubiquitinated by HRD1/SYVN1; undergoes 'Lys-48'-linked ubiquitination, followed by rapid proteasomal degradation under normal conditions. Upon ER stress, SYVN1 E3 ubiquitin-protein ligase dissociates from its substrate, ubiquitination does not occur and CREB3L2 is stabilized. As to expression, widely expressed with highest levels in placenta, lung, spleen and intestine, and lowest levels in heart, brain, skeletal muscle, thymus, colon and leukocytes. In fetal tissues, the weakest expression is detected in brain and heart.

The protein resides in the endoplasmic reticulum membrane. It is found in the nucleus. Functionally, transcription factor involved in unfolded protein response (UPR). In the absence of endoplasmic reticulum (ER) stress, inserted into ER membranes, with N-terminal DNA-binding and transcription activation domains oriented toward the cytosolic face of the membrane. In response to ER stress, transported to the Golgi, where it is cleaved in a site-specific manner by resident proteases S1P/MBTPS1 and S2P/MBTPS2. The released N-terminal cytosolic domain is translocated to the nucleus to effect transcription of specific target genes. Plays a critical role in chondrogenesis by activating the transcription of SEC23A, which promotes the transport and secretion of cartilage matrix proteins, and possibly that of ER biogenesis-related genes. In a neuroblastoma cell line, protects cells from ER stress-induced death. In vitro activates transcription of target genes via direct binding to the CRE site. The protein is Cyclic AMP-responsive element-binding protein 3-like protein 2 (CREB3L2) of Homo sapiens (Human).